Consider the following 296-residue polypeptide: Phosphoribosylaminoimidazole-succinocarboxamide synthase (296 aa).

This sequence belongs to the SAICAR synthetase family.

The catalysed reaction is 5-amino-1-(5-phospho-D-ribosyl)imidazole-4-carboxylate + L-aspartate + ATP = (2S)-2-[5-amino-1-(5-phospho-beta-D-ribosyl)imidazole-4-carboxamido]succinate + ADP + phosphate + 2 H(+). It participates in purine metabolism; IMP biosynthesis via de novo pathway; 5-amino-1-(5-phospho-D-ribosyl)imidazole-4-carboxamide from 5-amino-1-(5-phospho-D-ribosyl)imidazole-4-carboxylate: step 1/2. In Geobacter sp. (strain M21), this protein is Phosphoribosylaminoimidazole-succinocarboxamide synthase.